The chain runs to 347 residues: Ketol-acid reductoisomerase (NADP(+)) (347 aa).

Residues 3–182 (TKMFYDKDID…GSGCAGILET (180 aa)) enclose the KARI N-terminal Rossmann domain. NADP(+)-binding positions include 26 to 29 (YGAQ), Arg49, Ser53, and 83 to 86 (DELQ). His108 is an active-site residue. Gly134 is an NADP(+) binding site. Positions 183–328 (TFEEETTEDL…KKVRAMMPWI (146 aa)) constitute a KARI C-terminal knotted domain. Mg(2+) is bound by residues Asp191, Glu195, Glu227, and Glu231. Ser252 serves as a coordination point for substrate.

It belongs to the ketol-acid reductoisomerase family. Mg(2+) is required as a cofactor.

The enzyme catalyses (2R)-2,3-dihydroxy-3-methylbutanoate + NADP(+) = (2S)-2-acetolactate + NADPH + H(+). It carries out the reaction (2R,3R)-2,3-dihydroxy-3-methylpentanoate + NADP(+) = (S)-2-ethyl-2-hydroxy-3-oxobutanoate + NADPH + H(+). It participates in amino-acid biosynthesis; L-isoleucine biosynthesis; L-isoleucine from 2-oxobutanoate: step 2/4. The protein operates within amino-acid biosynthesis; L-valine biosynthesis; L-valine from pyruvate: step 2/4. Functionally, involved in the biosynthesis of branched-chain amino acids (BCAA). Catalyzes an alkyl-migration followed by a ketol-acid reduction of (S)-2-acetolactate (S2AL) to yield (R)-2,3-dihydroxy-isovalerate. In the isomerase reaction, S2AL is rearranged via a Mg-dependent methyl migration to produce 3-hydroxy-3-methyl-2-ketobutyrate (HMKB). In the reductase reaction, this 2-ketoacid undergoes a metal-dependent reduction by NADPH to yield (R)-2,3-dihydroxy-isovalerate. The protein is Ketol-acid reductoisomerase (NADP(+)) of Leuconostoc mesenteroides subsp. cremoris.